The primary structure comprises 361 residues: UDP-3-O-acylglucosamine N-acyltransferase (361 aa).

Residue His264 is the Proton acceptor of the active site.

The protein belongs to the transferase hexapeptide repeat family. LpxD subfamily. As to quaternary structure, homotrimer.

It carries out the reaction a UDP-3-O-[(3R)-3-hydroxyacyl]-alpha-D-glucosamine + a (3R)-hydroxyacyl-[ACP] = a UDP-2-N,3-O-bis[(3R)-3-hydroxyacyl]-alpha-D-glucosamine + holo-[ACP] + H(+). It participates in bacterial outer membrane biogenesis; LPS lipid A biosynthesis. Functionally, catalyzes the N-acylation of UDP-3-O-acylglucosamine using 3-hydroxyacyl-ACP as the acyl donor. Is involved in the biosynthesis of lipid A, a phosphorylated glycolipid that anchors the lipopolysaccharide to the outer membrane of the cell. The polypeptide is UDP-3-O-acylglucosamine N-acyltransferase (Bordetella avium (strain 197N)).